A 257-amino-acid polypeptide reads, in one-letter code: Imidazole glycerol phosphate synthase subunit HisF (257 aa).

Active-site residues include Asp11 and Asp130.

It belongs to the HisA/HisF family. As to quaternary structure, heterodimer of HisH and HisF.

It localises to the cytoplasm. It catalyses the reaction 5-[(5-phospho-1-deoxy-D-ribulos-1-ylimino)methylamino]-1-(5-phospho-beta-D-ribosyl)imidazole-4-carboxamide + L-glutamine = D-erythro-1-(imidazol-4-yl)glycerol 3-phosphate + 5-amino-1-(5-phospho-beta-D-ribosyl)imidazole-4-carboxamide + L-glutamate + H(+). It participates in amino-acid biosynthesis; L-histidine biosynthesis; L-histidine from 5-phospho-alpha-D-ribose 1-diphosphate: step 5/9. In terms of biological role, IGPS catalyzes the conversion of PRFAR and glutamine to IGP, AICAR and glutamate. The HisF subunit catalyzes the cyclization activity that produces IGP and AICAR from PRFAR using the ammonia provided by the HisH subunit. This chain is Imidazole glycerol phosphate synthase subunit HisF, found in Psychromonas ingrahamii (strain DSM 17664 / CCUG 51855 / 37).